Here is a 93-residue protein sequence, read N- to C-terminus: UPF0473 protein CHY_0543 (93 aa).

The protein belongs to the UPF0473 family.

This chain is UPF0473 protein CHY_0543, found in Carboxydothermus hydrogenoformans (strain ATCC BAA-161 / DSM 6008 / Z-2901).